Here is a 196-residue protein sequence, read N- to C-terminus: Cilia- and flagella-associated protein 107 (196 aa).

Mn stretches follow at residues 46-61 (TPQT…FPGH) and 96-108 (ISTY…RHNY). Residues 168–196 (YPRPPAGAMSRREHAIPVPPPRLQPVPHF) form a disordered region. Pro residues predominate over residues 184–196 (PVPPPRLQPVPHF).

In terms of assembly, microtubule inner protein component of sperm flagellar doublet microtubules. As to expression, expressed in trachea multiciliated cells.

It is found in the cytoplasm. The protein resides in the cytoskeleton. The protein localises to the cilium axoneme. Its subcellular location is the flagellum axoneme. Functionally, microtubule inner protein (MIP) part of the dynein-decorated doublet microtubules (DMTs) in cilia axoneme, which is required for motile cilia beating. The protein is Cilia- and flagella-associated protein 107 of Bos taurus (Bovine).